The sequence spans 149 residues: Calmodulin-2 (149 aa).

Ala-2 bears the N-acetylalanine mark. 4 consecutive EF-hand domains span residues 8-43, 44-79, 81-116, and 117-149; these read EQIA…LGQN, PTEG…KMKD, DSEE…PGEK, and LTDE…MTSK. Asp-21, Asp-23, Asn-25, Asn-27, Glu-32, Asp-57, Asp-59, Asn-61, Thr-63, Glu-68, Asp-94, Asp-96, Asn-98, and Glu-105 together coordinate Ca(2+). Lys-116 carries the post-translational modification N6,N6,N6-trimethyllysine. Asp-130, Asp-132, Asp-134, Gln-136, and Glu-141 together coordinate Ca(2+).

The protein belongs to the calmodulin family.

Functionally, calmodulin mediates the control of a large number of enzymes, ion channels and other proteins by Ca(2+). Among the enzymes to be stimulated by the calmodulin-Ca(2+) complex are a number of protein kinases and phosphatases. The polypeptide is Calmodulin-2 (CAM2) (Branchiostoma floridae (Florida lancelet)).